A 1407-amino-acid chain; its full sequence is DNA-directed RNA polymerase subunit beta' (1407 aa).

Residues cysteine 70, cysteine 72, cysteine 85, and cysteine 88 each coordinate Zn(2+). Residues aspartate 460, aspartate 462, and aspartate 464 each coordinate Mg(2+). Positions 814, 888, 895, and 898 each coordinate Zn(2+). Lysine 972 carries the N6-acetyllysine modification.

This sequence belongs to the RNA polymerase beta' chain family. As to quaternary structure, the RNAP catalytic core consists of 2 alpha, 1 beta, 1 beta' and 1 omega subunit. When a sigma factor is associated with the core the holoenzyme is formed, which can initiate transcription. It depends on Mg(2+) as a cofactor. Requires Zn(2+) as cofactor.

The enzyme catalyses RNA(n) + a ribonucleoside 5'-triphosphate = RNA(n+1) + diphosphate. Functionally, DNA-dependent RNA polymerase catalyzes the transcription of DNA into RNA using the four ribonucleoside triphosphates as substrates. The protein is DNA-directed RNA polymerase subunit beta' of Shigella flexneri serotype 5b (strain 8401).